Consider the following 196-residue polypeptide: Prefoldin subunit 3 (196 aa).

Residue A2 is modified to N-acetylalanine. K58 carries the post-translational modification N6-acetyllysine.

It belongs to the prefoldin subunit alpha family. In terms of assembly, heterohexamer of two PFD-alpha type and four PFD-beta type subunits. Binds to the C-terminal part of VHL.

It localises to the cytoplasm. It is found in the nucleus. Binds specifically to cytosolic chaperonin (c-CPN) and transfers target proteins to it. Binds to nascent polypeptide chain and promotes folding in an environment in which there are many competing pathways for nonnative proteins. This chain is Prefoldin subunit 3 (Vbp1), found in Mus musculus (Mouse).